The primary structure comprises 423 residues: Carboxypeptidase S1 (423 aa).

4 disulfides stabilise this stretch: cysteine 8-cysteine 68, cysteine 55-cysteine 300, cysteine 223-cysteine 246, and cysteine 230-cysteine 239. Residue serine 143 is part of the active site. A glycan (N-linked (GlcNAc...) asparagine) is linked at asparagine 200. Aspartate 340 is a catalytic residue. Substrate is bound at residue cysteine 343. Histidine 397 is an active-site residue. Residue glutamate 398 coordinates substrate.

This sequence belongs to the peptidase S10 family.

The enzyme catalyses Preferential release of a C-terminal arginine or lysine residue.. This Penicillium janthinellum (Penicillium vitale) protein is Carboxypeptidase S1.